A 79-amino-acid polypeptide reads, in one-letter code: D-alanyl carrier protein (79 aa).

A Carrier domain is found at 1–77 (MDVKETILNI…KIISGVVELM (77 aa)). Position 35 is an O-(pantetheine 4'-phosphoryl)serine (S35).

It belongs to the DltC family. 4'-phosphopantetheine is transferred from CoA to a specific serine of apo-DCP.

It localises to the cytoplasm. The protein operates within cell wall biogenesis; lipoteichoic acid biosynthesis. Functionally, carrier protein involved in the D-alanylation of lipoteichoic acid (LTA). The loading of thioester-linked D-alanine onto DltC is catalyzed by D-alanine--D-alanyl carrier protein ligase DltA. The DltC-carried D-alanyl group is further transferred to cell membrane phosphatidylglycerol (PG) by forming an ester bond, probably catalyzed by DltD. D-alanylation of LTA plays an important role in modulating the properties of the cell wall in Gram-positive bacteria, influencing the net charge of the cell wall. In Streptococcus suis (strain 98HAH33), this protein is D-alanyl carrier protein.